Consider the following 307-residue polypeptide: UDP-N-acetylenolpyruvoylglucosamine reductase (307 aa).

The FAD-binding PCMH-type domain occupies 34-198 (TGGNADFYLS…LEAAFTLEPG (165 aa)). Residue arginine 177 is part of the active site. The active-site Proton donor is serine 227. Glutamate 297 is a catalytic residue.

The protein belongs to the MurB family. The cofactor is FAD.

The protein resides in the cytoplasm. It catalyses the reaction UDP-N-acetyl-alpha-D-muramate + NADP(+) = UDP-N-acetyl-3-O-(1-carboxyvinyl)-alpha-D-glucosamine + NADPH + H(+). It participates in cell wall biogenesis; peptidoglycan biosynthesis. In terms of biological role, cell wall formation. In Staphylococcus haemolyticus (strain JCSC1435), this protein is UDP-N-acetylenolpyruvoylglucosamine reductase.